The following is a 544-amino-acid chain: Cytochrome P450 monooxygenase verL (544 aa).

The helical transmembrane segment at 3-23 threads the bilayer; it reads VALFPILPIGCLLIYIIFKLW. C446 lines the heme pocket. Positions 520-544 are disordered; it reads QEKGIDGWKGKKESSSEENRGVSSR.

It belongs to the cytochrome P450 family. Requires heme as cofactor.

The protein resides in the membrane. It functions in the pathway mycotoxin biosynthesis. In terms of biological role, cytochrome P450 monooxygenase; part of the gene cluster that mediates the biosynthesis of 11'-deoxyverticillin A, one of the dimeric epipolythiodioxopiperazines (ETPs) from the verticillin family that act as mycotoxins. 11'-deoxyverticillin A is required for normal conidiation. The nonribosomal peptide synthetase verP is speculated to be responsible for condensation of amino acids to form the carbon skeleton of verticillin, whereas the cluster-specific tailoring enzymes are involved in further modifications leading to the production of 11'-deoxyverticillin A. The polypeptide is Cytochrome P450 monooxygenase verL (Clonostachys rogersoniana).